Here is a 746-residue protein sequence, read N- to C-terminus: Exostosin-1 (746 aa).

Topologically, residues 1-5 (MQAKK) are cytoplasmic. The helical; Signal-anchor for type II membrane protein transmembrane segment at 6–26 (RYFILLSAGSCLALLFYFGGV) threads the bilayer. Topologically, residues 27-746 (QFRASRSHSR…RKKYRDIERL (720 aa)) are lumenal. A glycan (N-linked (GlcNAc...) asparagine) is linked at asparagine 89. 2 cysteine pairs are disulfide-bonded: cysteine 98/cysteine 103 and cysteine 109/cysteine 152. A protein is bound by residues leucine 166 and tyrosine 203. UDP-binding residues include lysine 267, lysine 269, tyrosine 271, and arginine 280. A disulfide bridge connects residues cysteine 298 and cysteine 312. Position 300 (histidine 300) interacts with a protein. 2 residues coordinate UDP: tyrosine 319 and tyrosine 324. The N-linked (GlcNAc...) asparagine glycan is linked to asparagine 330. Disulfide bonds link cysteine 334–cysteine 355 and cysteine 652–cysteine 704. Arginine 346 and glutamate 349 together coordinate UDP.

Belongs to the glycosyltransferase 47 family. In terms of assembly, part of the heparan sulfate polymerase, a dimeric complex composed of EXT1 and EXT2. Could also form homooligomeric complexes. Interacts with NDST1. In terms of processing, N-glycosylated.

Its subcellular location is the golgi apparatus membrane. The protein resides in the golgi apparatus. It is found in the cis-Golgi network membrane. The protein localises to the endoplasmic reticulum membrane. The catalysed reaction is 3-O-{alpha-D-GlcNAc-[(1-&gt;4)-beta-D-GlcA-(1-&gt;4)-alpha-D-GlcNAc](n)-(1-&gt;4)-beta-D-GlcA-(1-&gt;3)-beta-D-Gal-(1-&gt;3)-beta-D-Gal-(1-&gt;4)-beta-D-Xyl}-L-seryl-[protein] + UDP-alpha-D-glucuronate = 3-O-{[(1-&gt;4)-beta-D-GlcA-(1-&gt;4)-alpha-D-GlcNAc](n+1)-(1-&gt;4)-beta-D-GlcA-(1-&gt;3)-beta-D-Gal-(1-&gt;3)-beta-D-Gal-(1-&gt;4)-beta-D-Xyl}-L-seryl-[protein] + UDP + H(+). It participates in protein modification; protein glycosylation. Glycosyltransferase forming with EXT2 the heterodimeric heparan sulfate polymerase which catalyzes the elongation of the heparan sulfate glycan backbone. Glycan backbone extension consists in the alternating transfer of (1-&gt;4)-beta-D-GlcA and (1-&gt;4)-alpha-D-GlcNAc residues from their respective UDP-sugar donors. Both EXT1 and EXT2 are required for the full activity of the polymerase since EXT1 bears the N-acetylglucosaminyl-proteoglycan 4-beta-glucuronosyltransferase activity within the complex while EXT2 carries the glucuronosyl-N-acetylglucosaminyl-proteoglycan 4-alpha-N-acetylglucosaminyltransferase activity. Heparan sulfate proteoglycans are ubiquitous components of the extracellular matrix and play an important role in tissue homeostasis and signaling. In Cricetulus griseus (Chinese hamster), this protein is Exostosin-1.